The sequence spans 103 residues: Large ribosomal subunit protein bL21 (103 aa).

The protein belongs to the bacterial ribosomal protein bL21 family. In terms of assembly, part of the 50S ribosomal subunit. Contacts protein L20.

Its function is as follows. This protein binds to 23S rRNA in the presence of protein L20. The polypeptide is Large ribosomal subunit protein bL21 (Desulfitobacterium hafniense (strain DSM 10664 / DCB-2)).